Consider the following 505-residue polypeptide: MDASAAAAAEIAANGVLAKLEEEREAQKRYWEEHSRDLTVEAMMLDSRAADLDKEERPEILSLLPSYEGKSVLELGAGIGRFTGELAKTAGHVLAMDFIESVIKKNESINGHYKNASFMCADVTSPDLVIEDNSIDLIFSNWLLMYLSDAEVEKLVERMVKWLKVGGHIFFRESCFHQSGDSKRKVNPTHYREPRFYTKVFKEGHAIDQSGNSSELSLLTCKCVGAYVKNKKNQNQICWLWQKVNSTEDRDFQRFLDNVQYKISGILCYERVFGQGFVSTGGIETTKEFVDLLDLKPGQKVLDVGCGIGGGDFYMAENYDVHVVGIDLSINMVSFALEHAIGRKCAVEFEVADCTTKTYPDNTFDVIYSRDTILHIQDKPALFRSFFKWLKPGGKVLISDYCRSPGKPSEEFAAYIKQRGYDLHNVETYGQMLQNAGFHDVVAEDRTDQFLKVLQRELAEVEKNKDEFLADFGQEDYDDIVTGWNAKLQRSSAGEQRWGLFIGTK.

Residues Gly-76, Arg-81, Asp-97, Asp-122, Val-123, and Asn-141 each contribute to the S-adenosyl-L-homocysteine site. The phosphocholine site is built by Ser-174, Ser-179, Gly-180, Arg-184, and Tyr-191. N-methylethanolamine phosphate-binding positions include 260–261 (QY) and Tyr-269. Tyr-269 contacts phosphocholine. S-adenosyl-L-homocysteine is bound by residues Val-278, Ser-279, Gly-305, Asp-327, Asp-353, Cys-354, and Arg-370. Positions 401, 415, 419, 421, and 487 each coordinate phosphocholine. N-methylethanolamine phosphate contacts are provided by residues Tyr-401, Tyr-415, 419-421 (RGY), and Lys-487.

The protein belongs to the class I-like SAM-binding methyltransferase superfamily. PEAMT family.

It carries out the reaction phosphoethanolamine + S-adenosyl-L-methionine = N-methylethanolamine phosphate + S-adenosyl-L-homocysteine + H(+). The catalysed reaction is N-methylethanolamine phosphate + S-adenosyl-L-methionine = N,N-dimethylethanolamine phosphate + S-adenosyl-L-homocysteine + H(+). It catalyses the reaction N,N-dimethylethanolamine phosphate + S-adenosyl-L-methionine = phosphocholine + S-adenosyl-L-homocysteine + H(+). Its pathway is phospholipid metabolism; phosphatidylcholine biosynthesis; phosphocholine from phosphoethanolamine: step 1/1. Its activity is regulated as follows. Inhibited by phosphatidic acid. Its function is as follows. Involved in phosphocholine biosynthesis. Catalyzes the N-methylation of phosphoethanolamine, phosphomonomethylethanolamine and phosphodimethylethanolamine, the three methylation steps required to convert phosphoethanolamine to phosphocholine (PC). The protein is Phosphoethanolamine N-methyltransferase of Triticum aestivum (Wheat).